Reading from the N-terminus, the 339-residue chain is MKKKLFVLTMSTLFATQLINSNHANASTESVDKNFVVPESGINKIIPTYDEFKKAPKVNVGSLADNKNFVASEDKLSKIADPSAASKIVDKNFVVPESKLGNIVPEYKEINNRVNVATNNPASQQVDKHFVAKGPEVNRFITQNKVNHPFITTQTHYKKVITSYKSTHVHKHVNHATGSINKHFIVKPSEAPRYTQPSQSLMINHYFAVPGYHAHKFVTPGHASIKINHFCVVPQINSFKVIPPYGHNSHRMHVPSFQNNTTATHQNAKVKKAYDYKYFYSYKVVKGVKKYFSFSQSNGYKIGEPSLNIKNVNYQYAVPSYSPTHYVPEFKGSIPAPRV.

The signal sequence occupies residues 1-26; sequence MKKKLFVLTMSTLFATQLINSNHANA.

Its subcellular location is the cell surface. Its function is as follows. Adhesin that binds to the host cell extracellular matrix proteins fibronectin, fibrinogen, collagen, and vitronectin. This Staphylococcus aureus (strain bovine RF122 / ET3-1) protein is Extracellular matrix protein-binding protein emp (emp).